The chain runs to 1452 residues: ABC multidrug transporter A-1 (1452 aa).

The interval 1 to 20 (MNESHEAGKNSSTNVEEREE) is disordered. N-linked (GlcNAc...) asparagine glycans are attached at residues N2, N10, N228, N287, and N311. The ABC transporter 1 domain maps to 110-363 (LKTLSLARIA…FLQMGFVCPD (254 aa)). Helical transmembrane passes span 474 to 494 (VTIS…SIFY), 508 to 528 (ALLF…MLTL), 554 to 574 (MIMD…VLYF), 583 to 603 (GAFF…SMFF), 616 to 636 (VLPF…FAIP), and 725 to 745 (IGVI…ATDF). The 243-residue stretch at 802–1044 (FQWKDVCFDI…ILIDYFVRNG (243 aa)) folds into the ABC transporter 2 domain. ATP is bound at residue 838–845 (GVSGAGKT). 6 consecutive transmembrane segments (helical) span residues 1153–1173 (ALCV…PNTI), 1183–1203 (IFML…HFVA), 1223–1243 (FLIA…VLMF), 1271–1291 (LMIW…IAAF), 1297–1317 (AGNL…VLAT), and 1324–1344 (FWIF…MLSV). Residues N1350, N1365, and N1391 are each glycosylated (N-linked (GlcNAc...) asparagine). The helical transmembrane segment at 1418 to 1438 (FGLMWVFIVFNIFAACSLYWW) threads the bilayer.

It belongs to the ABC transporter superfamily. ABCG family. PDR (TC 3.A.1.205) subfamily.

It is found in the membrane. ABC transporter that seems not to be involved in the efflux of toxic substances, at least not the classical compounds such as itraconazole, amphotericin B, voriconazole, posaconazole, ravuconazole, or echinocandins. This Aspergillus fumigatus (strain ATCC MYA-4609 / CBS 101355 / FGSC A1100 / Af293) (Neosartorya fumigata) protein is ABC multidrug transporter A-1.